The sequence spans 221 residues: Penicillin-binding protein activator LpoB (221 aa).

Residues 1–20 form the signal peptide; it reads MLNRMYRYALLATVALALSG. Cysteine 21 carries N-palmitoyl cysteine lipidation. Cysteine 21 carries the S-diacylglycerol cysteine lipid modification. A disordered region spans residues 29–82; it reads PAPVEEAQPGTQQPTQPVPPPTQPVPTVPSVPSIPAQPGPIEHQPENATPEPKA. Positions 44 to 57 are enriched in pro residues; the sequence is QPVPPPTQPVPTVP.

The protein belongs to the LpoB family. In terms of assembly, interacts with PBP1b.

It is found in the cell outer membrane. Its function is as follows. Regulator of peptidoglycan synthesis that is essential for the function of penicillin-binding protein 1B (PBP1b). The sequence is that of Penicillin-binding protein activator LpoB from Cronobacter turicensis (strain DSM 18703 / CCUG 55852 / LMG 23827 / z3032).